The chain runs to 429 residues: Enolase (429 aa).

Q163 provides a ligand contact to (2R)-2-phosphoglycerate. Residue E205 is the Proton donor of the active site. Positions 242, 287, and 314 each coordinate Mg(2+). The (2R)-2-phosphoglycerate site is built by K339, R368, S369, and K390. Residue K339 is the Proton acceptor of the active site.

Belongs to the enolase family. Mg(2+) is required as a cofactor.

It is found in the cytoplasm. It localises to the secreted. The protein resides in the cell surface. The catalysed reaction is (2R)-2-phosphoglycerate = phosphoenolpyruvate + H2O. It participates in carbohydrate degradation; glycolysis; pyruvate from D-glyceraldehyde 3-phosphate: step 4/5. Catalyzes the reversible conversion of 2-phosphoglycerate (2-PG) into phosphoenolpyruvate (PEP). It is essential for the degradation of carbohydrates via glycolysis. This is Enolase from Cupriavidus taiwanensis (strain DSM 17343 / BCRC 17206 / CCUG 44338 / CIP 107171 / LMG 19424 / R1) (Ralstonia taiwanensis (strain LMG 19424)).